Here is a 653-residue protein sequence, read N- to C-terminus: MTIRILPARLANQIAAGEVVERPASVVKELVENSLDAGATRIDIDLEKGGAKLIRIRDNGSGIDKDELGLALSRHATSKIHTLDDLEAIMSLGFRGEALASISSVSRLTLTSRTVAQEEAWSAYSEGRDMAVKLQPAAHPVGTTVEVLDLFFNTPARRKFLRTEKTEFTHIDELLKRIALSRFDVSFTLRHNGKIVRQYRAATTLPQQEKRLAAVCGNPFVQHMLRIELEHQGLKLHGWITTPEGARQQSDLQYCYVNGRMMRDKLINHAIRQSYETSLRVDQFATYVLFIELDPHQVDVNVHPAKHEVRFHQARLVHDFIYQALSSALVQGAQVMAPTINEGAFHLPHCAEEVNPPVVPMIDTTQQERVWQAVQNTPDYPRKAPRDNDRDESDNPQVRERAVSNPWVASPKTASTGKERYGSASVSKKEAAVYQTLMQTPDLSDEEPSTASTIVSSIEAVKANIAIEKLGKAIQVVAGQYLLMSSPQGCVLISLYQAQQLKLRGLLNAQHGALKAQPLLVPLALKLNESEWQVAQRHSSALLQLGIELKSRTNHSIMVMAVPQPLRQQNLQQLLPDLLSYAASCSESQALSHQALADWLTQRIVVEKRDYTLAEAIGLIAELEQLWQGNLPLQDPHFITLVDFSASITALHS.

The segment at 375–425 (QNTPDYPRKAPRDNDRDESDNPQVRERAVSNPWVASPKTASTGKERYGSAS) is disordered. Residues 380 to 389 (YPRKAPRDND) show a composition bias toward basic and acidic residues.

It belongs to the DNA mismatch repair MutL/HexB family.

This protein is involved in the repair of mismatches in DNA. It is required for dam-dependent methyl-directed DNA mismatch repair. May act as a 'molecular matchmaker', a protein that promotes the formation of a stable complex between two or more DNA-binding proteins in an ATP-dependent manner without itself being part of a final effector complex. The protein is DNA mismatch repair protein MutL of Vibrio cholerae serotype O1 (strain ATCC 39541 / Classical Ogawa 395 / O395).